The following is a 148-amino-acid chain: Transcriptional repressor NrdR (148 aa).

The tract at residues Met1–Gly22 is disordered. Residues Cys3–Cys34 fold into a zinc finger. Residues Leu49–Arg136 enclose the ATP-cone domain.

Belongs to the NrdR family. Zn(2+) serves as cofactor.

Negatively regulates transcription of bacterial ribonucleotide reductase nrd genes and operons by binding to NrdR-boxes. This chain is Transcriptional repressor NrdR, found in Deinococcus deserti (strain DSM 17065 / CIP 109153 / LMG 22923 / VCD115).